A 127-amino-acid polypeptide reads, in one-letter code: MARVKRSVNAKKKRRAILKSAKGYRGQRSRLYRKAKEQWLHSMTYAYRDRRARKSEFRKLWIQRINAAARMNDITYNRLIHGLRLAEIEVDRKILAELAVNDFEAFSALCEAAKAALPEDVNAPKAA.

It belongs to the bacterial ribosomal protein bL20 family.

Binds directly to 23S ribosomal RNA and is necessary for the in vitro assembly process of the 50S ribosomal subunit. It is not involved in the protein synthesizing functions of that subunit. In Corynebacterium aurimucosum (strain ATCC 700975 / DSM 44827 / CIP 107346 / CN-1) (Corynebacterium nigricans), this protein is Large ribosomal subunit protein bL20.